A 127-amino-acid polypeptide reads, in one-letter code: Protein ApaG (127 aa).

The 125-residue stretch at 3-127 folds into the ApaG domain; that stretch reads EGKKYQINIS…FTLAMPRVLH (125 aa).

The polypeptide is Protein ApaG (Thiobacillus denitrificans (strain ATCC 25259 / T1)).